A 201-amino-acid chain; its full sequence is Cardiotrophin-1 (201 aa).

It belongs to the IL-6 superfamily. Highly expressed in heart, skeletal muscle, prostate and ovary. Lower levels in lung, kidney, pancreas, thymus, testis and small intestine. Little or no expression in brain, placenta, liver, spleen, colon or peripheral blood leukocytes.

It is found in the secreted. In terms of biological role, induces cardiac myocyte hypertrophy in vitro. Binds to and activates the ILST/gp130 receptor. This chain is Cardiotrophin-1 (CTF1), found in Homo sapiens (Human).